Here is an 80-residue protein sequence, read N- to C-terminus: U19-lycotoxin-Ls1a (80 aa).

The signal sequence occupies residues 1 to 22 (MSPKVQALIFIVGLITLLAAHA). A propeptide spanning residues 23 to 34 (QEELSDNTESER) is cleaved from the precursor. Disulfide bonds link Cys-36/Cys-50, Cys-43/Cys-55, Cys-49/Cys-66, and Cys-57/Cys-64.

It belongs to the neurotoxin 02 (plectoxin) family. 05 (U19-lycotoxin) subfamily. As to expression, expressed by the venom gland.

Its subcellular location is the secreted. The sequence is that of U19-lycotoxin-Ls1a from Lycosa singoriensis (Wolf spider).